A 271-amino-acid chain; its full sequence is Extracellular metalloprotease TRV_06892 (271 aa).

The signal sequence occupies residues 1 to 19 (MRFSVLLTGLAAAGSIATA). An N-linked (GlcNAc...) asparagine glycan is attached at Asn-136. His-185 contributes to the Zn(2+) binding site. The active site involves Glu-186. His-189 lines the Zn(2+) pocket. Residue Asn-200 is glycosylated (N-linked (GlcNAc...) asparagine). A disulfide bond links Cys-222 and Cys-248.

This sequence belongs to the peptidase M43B family.

The protein localises to the secreted. Functionally, secreted metalloproteinase that allows assimilation of proteinaceous substrates. Plays a pivotal role as a pathogenicity determinant during infections and contributes to the ability of the pathogen to persist within the mammalian host. In Trichophyton verrucosum (strain HKI 0517), this protein is Extracellular metalloprotease TRV_06892.